Consider the following 138-residue polypeptide: Acidic phospholipase A2 2 (138 aa).

An N-terminal signal peptide occupies residues Met-1–Gly-16. 7 cysteine pairs are disulfide-bonded: Cys-42/Cys-131, Cys-44/Cys-60, Cys-59/Cys-111, Cys-65/Cys-138, Cys-66/Cys-104, Cys-73/Cys-97, and Cys-91/Cys-102. Ca(2+) contacts are provided by Tyr-43, Gly-45, and Gly-47. Residue His-63 is part of the active site. Asp-64 contacts Ca(2+). The active site involves Asp-105.

Belongs to the phospholipase A2 family. Group II subfamily. D49 sub-subfamily. Ca(2+) is required as a cofactor. Expressed by the venom gland.

It is found in the secreted. It catalyses the reaction a 1,2-diacyl-sn-glycero-3-phosphocholine + H2O = a 1-acyl-sn-glycero-3-phosphocholine + a fatty acid + H(+). Its function is as follows. Snake venom phospholipase A2 (PLA2) that displays edema-inducing activities, exhibits indirect hemolytic activity, and inhibits ADP-induced platelet aggregation. PLA2 catalyzes the calcium-dependent hydrolysis of the 2-acyl groups in 3-sn-phosphoglycerides. The polypeptide is Acidic phospholipase A2 2 (Protobothrops mucrosquamatus (Taiwan habu)).